The chain runs to 278 residues: Large ribosomal subunit protein uL2 (278 aa).

Disordered stretches follow at residues 33–53 and 221–278; these read LTEG…TSRG and RGVA…KKKR. Basic residues predominate over residues 269 to 278; the sequence is IRSRHAKKKR.

This sequence belongs to the universal ribosomal protein uL2 family. In terms of assembly, part of the 50S ribosomal subunit. Forms a bridge to the 30S subunit in the 70S ribosome.

Its function is as follows. One of the primary rRNA binding proteins. Required for association of the 30S and 50S subunits to form the 70S ribosome, for tRNA binding and peptide bond formation. It has been suggested to have peptidyltransferase activity; this is somewhat controversial. Makes several contacts with the 16S rRNA in the 70S ribosome. The protein is Large ribosomal subunit protein uL2 of Novosphingobium aromaticivorans (strain ATCC 700278 / DSM 12444 / CCUG 56034 / CIP 105152 / NBRC 16084 / F199).